The primary structure comprises 472 residues: ATP synthase subunit beta (472 aa).

157-164 contributes to the ATP binding site; sequence GGAGVGKT.

This sequence belongs to the ATPase alpha/beta chains family. In terms of assembly, F-type ATPases have 2 components, CF(1) - the catalytic core - and CF(0) - the membrane proton channel. CF(1) has five subunits: alpha(3), beta(3), gamma(1), delta(1), epsilon(1). CF(0) has three main subunits: a(1), b(2) and c(9-12). The alpha and beta chains form an alternating ring which encloses part of the gamma chain. CF(1) is attached to CF(0) by a central stalk formed by the gamma and epsilon chains, while a peripheral stalk is formed by the delta and b chains.

It localises to the cell membrane. It catalyses the reaction ATP + H2O + 4 H(+)(in) = ADP + phosphate + 5 H(+)(out). Produces ATP from ADP in the presence of a proton gradient across the membrane. The catalytic sites are hosted primarily by the beta subunits. In Desulforudis audaxviator (strain MP104C), this protein is ATP synthase subunit beta.